A 127-amino-acid polypeptide reads, in one-letter code: Holo-[acyl-carrier-protein] synthase (127 aa).

2 residues coordinate Mg(2+): Asp8 and Glu56.

Belongs to the P-Pant transferase superfamily. AcpS family. Mg(2+) is required as a cofactor.

The protein localises to the cytoplasm. The enzyme catalyses apo-[ACP] + CoA = holo-[ACP] + adenosine 3',5'-bisphosphate + H(+). Functionally, transfers the 4'-phosphopantetheine moiety from coenzyme A to a Ser of acyl-carrier-protein. This chain is Holo-[acyl-carrier-protein] synthase, found in Caldanaerobacter subterraneus subsp. tengcongensis (strain DSM 15242 / JCM 11007 / NBRC 100824 / MB4) (Thermoanaerobacter tengcongensis).